The primary structure comprises 208 residues: Imidazoleglycerol-phosphate dehydratase (208 aa).

It belongs to the imidazoleglycerol-phosphate dehydratase family.

It is found in the cytoplasm. It carries out the reaction D-erythro-1-(imidazol-4-yl)glycerol 3-phosphate = 3-(imidazol-4-yl)-2-oxopropyl phosphate + H2O. It functions in the pathway amino-acid biosynthesis; L-histidine biosynthesis; L-histidine from 5-phospho-alpha-D-ribose 1-diphosphate: step 6/9. This is Imidazoleglycerol-phosphate dehydratase from Anaeromyxobacter dehalogenans (strain 2CP-1 / ATCC BAA-258).